The following is a 196-amino-acid chain: Ribosomal RNA small subunit methyltransferase G (196 aa).

S-adenosyl-L-methionine is bound by residues G77, F82, 127 to 128 (AE), and R140.

It belongs to the methyltransferase superfamily. RNA methyltransferase RsmG family.

It is found in the cytoplasm. Specifically methylates the N7 position of a guanine in 16S rRNA. In Aquifex aeolicus (strain VF5), this protein is Ribosomal RNA small subunit methyltransferase G.